We begin with the raw amino-acid sequence, 671 residues long: tRNA(Met) cytidine acetyltransferase TmcA (671 aa).

Residues Q180, 202–211 (GRGKSALAGQ), and R319 each bind ATP. Residues 356–531 (QTLWQSDPET…SGCYTAMALL (176 aa)) form the N-acetyltransferase domain. Residues 461-463 (IAV), 468-474 (QREGTGR), E499, and R506 contribute to the acetyl-CoA site.

The protein belongs to the RNA cytidine acetyltransferase family. TmcA subfamily.

The protein localises to the cytoplasm. It catalyses the reaction cytidine(34) in elongator tRNA(Met) + acetyl-CoA + ATP + H2O = N(4)-acetylcytidine(34) in elongator tRNA(Met) + ADP + phosphate + CoA + H(+). The catalysed reaction is 2-hydroxyisobutanoyl-CoA + L-lysyl-[protein] = N(6)-(2-hydroxyisobutanoyl)-L-lysyl-[protein] + CoA + H(+). With respect to regulation, ATP/GTP hydrolysis is stimulated by the addition of acetyl-CoA and tRNA(Met). Binding of acetyl-CoA to TmcA activates both ATPase and tRNA-binding activities. ATP promotes the 2-hydroxyisobutyryltransferase activity. Its function is as follows. Catalyzes the formation of N(4)-acetylcytidine (ac(4)C) at the wobble position of tRNA(Met), by using acetyl-CoA as an acetyl donor and ATP (or GTP). It recognizes the wobble base of tRNA(Met), thus distinguishing between tRNA(Met) and the structurally similar tRNA(Ile2). Could use an RNA helicase motor driven by ATP hydrolysis to deliver the wobble base of tRNA(Met) to the acetyltransferase domain of TmcA. In terms of biological role, also functions as a lysine 2-hydroxyisobutyryltransferase to regulate transcription. Can specifically catalyze the 2-hydroxyisobutyrylation (Khib) of the DNA-binding protein H-NS. Hydroxyisobutyrylation of H-NS decreases its DNA-binding activity, promotes the expression of acid-resistance genes and enhances bacterial survival under extreme acid stress. This Escherichia coli (strain K12) protein is tRNA(Met) cytidine acetyltransferase TmcA.